Here is a 730-residue protein sequence, read N- to C-terminus: Translation factor GUF1 homolog, mitochondrial (730 aa).

One can recognise a tr-type G domain in the interval 106-289; the sequence is ELIRNFCIIA…AVVVSIPPPK (184 aa). Residues 115 to 122, 182 to 186, and 236 to 239 each bind GTP; these read AHVDHGKS, DTPGH, and NKID.

Belongs to the TRAFAC class translation factor GTPase superfamily. Classic translation factor GTPase family. LepA subfamily.

Its subcellular location is the mitochondrion inner membrane. The catalysed reaction is GTP + H2O = GDP + phosphate + H(+). In terms of biological role, promotes mitochondrial protein synthesis. May act as a fidelity factor of the translation reaction, by catalyzing a one-codon backward translocation of tRNAs on improperly translocated ribosomes. Binds to mitochondrial ribosomes in a GTP-dependent manner. The sequence is that of Translation factor GUF1 homolog, mitochondrial from Theileria annulata.